A 241-amino-acid chain; its full sequence is Tubulin-like protein alpha-4B (241 aa).

Over residues 1-10 (MRHQQTERQD) the composition is skewed to basic and acidic residues. Residues 1–20 (MRHQQTERQDPSQPLSRQHG) form a disordered region. A GTP-binding site is contributed by Asp10. Position 10 (Asp10) interacts with Mg(2+). The segment covering 11 to 20 (PSQPLSRQHG) has biased composition (polar residues). GTP contacts are provided by Ser79, Gly83, Thr84, Thr118, Asn145, and Asn167. The active site involves Glu193.

Belongs to the tubulin family. The cofactor is Mg(2+). In terms of processing, some glutamate residues at the C-terminus are polyglutamylated, resulting in polyglutamate chains on the gamma-carboxyl group. Polyglutamylation plays a key role in microtubule severing by spastin (SPAST). SPAST preferentially recognizes and acts on microtubules decorated with short polyglutamate tails: severing activity by SPAST increases as the number of glutamates per tubulin rises from one to eight, but decreases beyond this glutamylation threshold. Glutamylation is also involved in cilia motility. Some glutamate residues at the C-terminus are monoglycylated but not polyglycylated due to the absence of functional TTLL10 in human. Monoglycylation is mainly limited to tubulin incorporated into cilia and flagella axonemes, which is required for their stability and maintenance. Flagella glycylation controls sperm motility. Both polyglutamylation and monoglycylation can coexist on the same protein on adjacent residues, and lowering glycylation levels increases polyglutamylation, and reciprocally.

It localises to the cytoplasm. The protein localises to the cytoskeleton. It carries out the reaction GTP + H2O = GDP + phosphate + H(+). Its function is as follows. Tubulin is the major constituent of microtubules, a cylinder consisting of laterally associated linear protofilaments composed ofalpha- and beta-tubulin heterodimers. In Homo sapiens (Human), this protein is Tubulin-like protein alpha-4B (TUBA4B).